A 415-amino-acid polypeptide reads, in one-letter code: Probable glucuronosyltransferase Os01g0926600 (415 aa).

Topologically, residues 1 to 4 (MAMR) are cytoplasmic. Residues 5-25 (LSSAAVALALLLAATALEDVA) form a helical; Signal-anchor for type II membrane protein membrane-spanning segment. Residues 26–415 (RGQDTERIEG…QGPVGDLKPW (390 aa)) lie on the Lumenal side of the membrane. N-linked (GlcNAc...) asparagine glycosylation is found at Asn142 and Asn403.

Belongs to the glycosyltransferase 47 family.

It localises to the golgi apparatus membrane. Functionally, involved in the synthesis of glucuronoxylan hemicellulose in secondary cell walls. In Oryza sativa subsp. japonica (Rice), this protein is Probable glucuronosyltransferase Os01g0926600.